The sequence spans 1678 residues: Serine/threonine-protein kinase pakD (1678 aa).

The segment covering 1-15 has biased composition (low complexity); that stretch reads MSRLQPQQQQRGRSS. Disordered stretches follow at residues 1 to 73, 180 to 224, 262 to 428, and 442 to 489; these read MSRL…NNKF, NSNS…PNKN, QLSS…NNNN, and KRKS…SQSS. The span at 17–34 shows a compositional bias: polar residues; that stretch reads FKDNFQIQKPLQSLTPSE. Low complexity-rich tracts occupy residues 35–73 and 180–214; these read QQQQ…NNKF and NSNS…NNNN. Residues 82 to 189 enclose the Calponin-homology (CH) domain; the sequence is KNVENDIKKW…NSNSSKTTTN (108 aa). Over residues 215–224 the composition is skewed to polar residues; sequence RAIITSPNKN. Low complexity-rich tracts occupy residues 276-359 and 399-428; these read NNNN…NINN and NNNN…NNNN. Positions 460 to 472 are enriched in acidic residues; the sequence is DSSDSSDSSDSDS. Coiled-coil stretches lie at residues 512–542 and 570–628; these read KQDK…KKLL and TRQI…YANT. Low complexity-rich tracts occupy residues 631 to 654, 662 to 671, and 695 to 713; these read SSNS…INGS, NSSTSKGTLS, and NSHQ…QTTS. Disordered stretches follow at residues 631 to 672 and 693 to 722; these read SSNS…TLSR and PVNS…ASYN. A coiled-coil region spans residues 752 to 862; the sequence is VSATLQQKQQ…QNQQINNLID (111 aa). The segment at 1141–1197 adopts a Phorbol-ester/DAG-type zinc-finger fold; sequence PHSFVLKSFRIISECNYCRQYIWGVRGIVAREAFECVGCKYKTHKKCLKEASEKTFC. The CRIB domain occupies 1202 to 1215; it reads VGAPFNVKHEMHVG. 2 disordered regions span residues 1267–1292 and 1323–1346; these read LTNN…QQNQ and NNTY…PNNN. A coiled-coil region spans residues 1269–1309; that stretch reads NNSNNNNNNNNSNNNLQQQQQQNQQLKQKLNITNNQQNNTI. The Protein kinase domain occupies 1376 to 1647; the sequence is YKVREVVGGG…AHYLLRHPFL (272 aa). ATP contacts are provided by residues 1382 to 1390 and K1405; that span reads VGGGSTGKV. D1515 functions as the Proton acceptor in the catalytic mechanism.

This sequence belongs to the protein kinase superfamily. STE Ser/Thr protein kinase family. STE20 subfamily. The cofactor is Mg(2+).

The enzyme catalyses L-seryl-[protein] + ATP = O-phospho-L-seryl-[protein] + ADP + H(+). It carries out the reaction L-threonyl-[protein] + ATP = O-phospho-L-threonyl-[protein] + ADP + H(+). The chain is Serine/threonine-protein kinase pakD from Dictyostelium discoideum (Social amoeba).